Here is a 212-residue protein sequence, read N- to C-terminus: MDTPLLNFRKVHFVTSAPDIRHLPNDGGIEIAFAGRSNAGKSSALNALTQQRQLARTSKTPGRTQLINLFELEPGKRLVDLPGYGYAQVPIEMKLKWQAALSEYLQKRESLKALVLLMDIRHPLKDLDLQMLEWASNSDLNILVLLTKADKLNPGPRKTVVQQVRKATMVFGDSVRVEAFSSLKGTGVDEVTRILSDWYQPEDTPDEISEAE.

In terms of domain architecture, EngB-type G spans 27-201 (GGIEIAFAGR…TRILSDWYQP (175 aa)). GTP contacts are provided by residues 35-42 (GRSNAGKS), 62-66 (GRTQL), 80-83 (DLPG), 147-150 (TKAD), and 180-182 (FSS). Positions 42 and 64 each coordinate Mg(2+).

The protein belongs to the TRAFAC class TrmE-Era-EngA-EngB-Septin-like GTPase superfamily. EngB GTPase family. Mg(2+) serves as cofactor.

Functionally, necessary for normal cell division and for the maintenance of normal septation. This Tolumonas auensis (strain DSM 9187 / NBRC 110442 / TA 4) protein is Probable GTP-binding protein EngB.